Here is a 663-residue protein sequence, read N- to C-terminus: Translation factor GUF1, mitochondrial (663 aa).

Residues 1 to 44 (MRGCLQSVRWLTTALRRPAPQLSCLPFQPFASTSRLFSSCASRA) constitute a mitochondrion transit peptide. Residues 65–245 (ERFRNFCIVA…TIVEQIPAPV (181 aa)) form the tr-type G domain. GTP contacts are provided by residues 74–81 (AHVDHGKS), 138–142 (DTPGH), and 192–195 (NKVD).

Belongs to the TRAFAC class translation factor GTPase superfamily. Classic translation factor GTPase family. LepA subfamily.

It localises to the mitochondrion inner membrane. The enzyme catalyses GTP + H2O = GDP + phosphate + H(+). Promotes mitochondrial protein synthesis. May act as a fidelity factor of the translation reaction, by catalyzing a one-codon backward translocation of tRNAs on improperly translocated ribosomes. Binds to mitochondrial ribosomes in a GTP-dependent manner. The sequence is that of Translation factor GUF1, mitochondrial from Coccidioides posadasii (strain C735) (Valley fever fungus).